The sequence spans 244 residues: Methanethiol S-methyltransferase (244 aa).

5 helical membrane-spanning segments follow: residues 7 to 27 (IIYG…AIGF), 41 to 61 (IAAP…VFAV), 90 to 110 (LLAS…PAVI), 120 to 140 (VALW…TFMI), and 181 to 201 (GFVV…LFAI).

It belongs to the nurim family.

It is found in the membrane. It carries out the reaction methanethiol + S-adenosyl-L-methionine = dimethyl sulfide + S-adenosyl-L-homocysteine + H(+). Functionally, catalyzes the methylation of methanethiol (MeSH) to yield dimethylsulphide (DMS). This chain is Methanethiol S-methyltransferase, found in Mycobacterium tuberculosis (strain ATCC 25618 / H37Rv).